The sequence spans 770 residues: Potassium transporter 25 (770 aa).

Residues Met1–Ser23 are Cytoplasmic-facing. The helical transmembrane segment at Trp24–Thr44 threads the bilayer. Residues Ser45 to Gly70 lie on the Extracellular side of the membrane. A helical transmembrane segment spans residues Val71–Val91. Topologically, residues Leu92 to Arg152 are cytoplasmic. Residues Leu153–Pro173 form a helical membrane-spanning segment. Residues Ala174–Lys194 lie on the Extracellular side of the membrane. A helical membrane pass occupies residues Tyr195 to Gly215. The Cytoplasmic segment spans residues Thr216 to Arg218. The helical transmembrane segment at Val219–Val239 threads the bilayer. Residues Tyr240–Thr267 are Extracellular-facing. Residues Gly268–Ala288 traverse the membrane as a helical segment. The Cytoplasmic segment spans residues Asp289 to Lys299. A helical transmembrane segment spans residues Ile300–Tyr320. The Extracellular portion of the chain corresponds to Ile321–Pro346. A helical transmembrane segment spans residues Val347–Phe367. Topologically, residues Ser368–Gln394 are cytoplasmic. A helical transmembrane segment spans residues Ile395–Phe415. The Extracellular segment spans residues Arg416–Gln425. A helical membrane pass occupies residues Gly426 to Leu446. Residues Cys447–Ser451 lie on the Cytoplasmic side of the membrane. A helical transmembrane segment spans residues Ile452–Ala472. Residues Ser473 to Glu479 lie on the Extracellular side of the membrane. A helical transmembrane segment spans residues Gly480–Tyr500. The Cytoplasmic portion of the chain corresponds to Gly501–Val770.

It belongs to the HAK/KUP transporter (TC 2.A.72.3) family.

The protein localises to the membrane. Functionally, high-affinity potassium transporter. The polypeptide is Potassium transporter 25 (HAK25) (Oryza sativa subsp. japonica (Rice)).